A 330-amino-acid chain; its full sequence is Inactive hydroxysteroid dehydrogenase-like protein 1 (330 aa).

The residue at position 2 (A2) is an N-acetylalanine. The tract at residues 2–82 (AAVDSFYLLY…SGATDGIGRA (81 aa)) is required for mitochondria translocation. NADP(+) contacts are provided by residues 74-80 (GATDGIG), D125, and K222.

The protein belongs to the short-chain dehydrogenases/reductases (SDR) family. 17-beta-HSD 3 subfamily. In terms of assembly, interacts with STYXL1.

The protein resides in the mitochondrion. The polypeptide is Inactive hydroxysteroid dehydrogenase-like protein 1 (HSDL1) (Pongo abelii (Sumatran orangutan)).